The chain runs to 469 residues: Ribulose bisphosphate carboxylase large chain (469 aa).

Positions 1 to 2 (MS) are excised as a propeptide. The residue at position 3 (proline 3) is an N-acetylproline. Lysine 14 is subject to N6,N6,N6-trimethyllysine. Substrate-binding residues include asparagine 123 and threonine 173. Catalysis depends on lysine 175, which acts as the Proton acceptor. A substrate-binding site is contributed by lysine 177. Positions 201, 203, and 204 each coordinate Mg(2+). Residue lysine 201 is modified to N6-carboxylysine. The active-site Proton acceptor is histidine 294. Substrate-binding residues include arginine 295, histidine 327, and serine 379.

Belongs to the RuBisCO large chain family. Type I subfamily. As to quaternary structure, heterohexadecamer of 8 large chains and 8 small chains; disulfide-linked. The disulfide link is formed within the large subunit homodimers. Requires Mg(2+) as cofactor. The disulfide bond which can form in the large chain dimeric partners within the hexadecamer appears to be associated with oxidative stress and protein turnover.

It localises to the plastid. The protein resides in the chloroplast. The catalysed reaction is 2 (2R)-3-phosphoglycerate + 2 H(+) = D-ribulose 1,5-bisphosphate + CO2 + H2O. It carries out the reaction D-ribulose 1,5-bisphosphate + O2 = 2-phosphoglycolate + (2R)-3-phosphoglycerate + 2 H(+). Functionally, ruBisCO catalyzes two reactions: the carboxylation of D-ribulose 1,5-bisphosphate, the primary event in carbon dioxide fixation, as well as the oxidative fragmentation of the pentose substrate in the photorespiration process. Both reactions occur simultaneously and in competition at the same active site. This chain is Ribulose bisphosphate carboxylase large chain, found in Brexia madagascariensis.